The chain runs to 442 residues: Adenylosuccinate synthetase (442 aa).

GTP-binding positions include 30-36 (GDEGKGK) and 58-60 (GHT). Catalysis depends on Asp-31, which acts as the Proton acceptor. 2 residues coordinate Mg(2+): Asp-31 and Gly-58. IMP-binding positions include 31–34 (DEGK), 56–59 (NAGH), Thr-148, Arg-162, Asn-241, Thr-256, and Arg-320. Catalysis depends on His-59, which acts as the Proton donor. A substrate-binding site is contributed by 316-322 (TTTGRRR). GTP contacts are provided by residues Arg-322, 348-350 (KLD), and 430-432 (GVG).

Belongs to the adenylosuccinate synthetase family. As to quaternary structure, homodimer. Requires Mg(2+) as cofactor.

It localises to the cytoplasm. It carries out the reaction IMP + L-aspartate + GTP = N(6)-(1,2-dicarboxyethyl)-AMP + GDP + phosphate + 2 H(+). It functions in the pathway purine metabolism; AMP biosynthesis via de novo pathway; AMP from IMP: step 1/2. In terms of biological role, plays an important role in the de novo pathway and in the salvage pathway of purine nucleotide biosynthesis. Catalyzes the first committed step in the biosynthesis of AMP from IMP. This Trichoplax adhaerens (Trichoplax reptans) protein is Adenylosuccinate synthetase.